A 368-amino-acid chain; its full sequence is Phosphoribosylaminoimidazole-succinocarboxamide synthase (368 aa).

Belongs to the SAICAR synthetase family.

It catalyses the reaction 5-amino-1-(5-phospho-D-ribosyl)imidazole-4-carboxylate + L-aspartate + ATP = (2S)-2-[5-amino-1-(5-phospho-beta-D-ribosyl)imidazole-4-carboxamido]succinate + ADP + phosphate + 2 H(+). It functions in the pathway purine metabolism; IMP biosynthesis via de novo pathway; 5-amino-1-(5-phospho-D-ribosyl)imidazole-4-carboxamide from 5-amino-1-(5-phospho-D-ribosyl)imidazole-4-carboxylate: step 1/2. This Vibrio cholerae serotype O1 (strain ATCC 39315 / El Tor Inaba N16961) protein is Phosphoribosylaminoimidazole-succinocarboxamide synthase.